Here is a 230-residue protein sequence, read N- to C-terminus: UPF0173 metal-dependent hydrolase Mbar_A3716 (230 aa).

Belongs to the UPF0173 family.

This chain is UPF0173 metal-dependent hydrolase Mbar_A3716, found in Methanosarcina barkeri (strain Fusaro / DSM 804).